The primary structure comprises 275 residues: Large ribosomal subunit protein uL2c (275 aa).

2 disordered regions span residues 1–28 (MGIR…TKSK) and 227–251 (PCDH…TPWG). Over residues 10-22 (TPGTRNRSSSDFS) the composition is skewed to polar residues.

This sequence belongs to the universal ribosomal protein uL2 family. In terms of assembly, part of the 50S ribosomal subunit.

It localises to the plastid. Its subcellular location is the chloroplast. This Rhodomonas salina (Cryptomonas salina) protein is Large ribosomal subunit protein uL2c (rpl2).